The sequence spans 258 residues: Pyridoxine 5'-phosphate synthase (258 aa).

Asn-16 serves as a coordination point for 3-amino-2-oxopropyl phosphate. 18 to 19 (DH) is a binding site for 1-deoxy-D-xylulose 5-phosphate. Arg-27 is a binding site for 3-amino-2-oxopropyl phosphate. His-52 acts as the Proton acceptor in catalysis. 1-deoxy-D-xylulose 5-phosphate is bound by residues Arg-54 and His-59. Glu-79 serves as the catalytic Proton acceptor. Thr-109 serves as a coordination point for 1-deoxy-D-xylulose 5-phosphate. The active-site Proton donor is His-200. Residues Gly-201 and 222-223 (GH) contribute to the 3-amino-2-oxopropyl phosphate site.

The protein belongs to the PNP synthase family. As to quaternary structure, homooctamer; tetramer of dimers.

The protein localises to the cytoplasm. It carries out the reaction 3-amino-2-oxopropyl phosphate + 1-deoxy-D-xylulose 5-phosphate = pyridoxine 5'-phosphate + phosphate + 2 H2O + H(+). Its pathway is cofactor biosynthesis; pyridoxine 5'-phosphate biosynthesis; pyridoxine 5'-phosphate from D-erythrose 4-phosphate: step 5/5. Functionally, catalyzes the complicated ring closure reaction between the two acyclic compounds 1-deoxy-D-xylulose-5-phosphate (DXP) and 3-amino-2-oxopropyl phosphate (1-amino-acetone-3-phosphate or AAP) to form pyridoxine 5'-phosphate (PNP) and inorganic phosphate. This Burkholderia lata (strain ATCC 17760 / DSM 23089 / LMG 22485 / NCIMB 9086 / R18194 / 383) protein is Pyridoxine 5'-phosphate synthase.